The following is a 225-amino-acid chain: Endo-1,4-beta-xylanase (225 aa).

The N-terminal stretch at 1–31 (MVGFTPVALAALAATGALAFPAGNATELEKR) is a signal peptide. Residue Gln32 is modified to Pyrrolidone carboxylic acid. In terms of domain architecture, GH11 spans 32–222 (QTTPNSEGWH…SSGYARITVA (191 aa)). Glu117 acts as the Nucleophile in catalysis. An intrachain disulfide couples Cys141 to Cys185. The active-site Proton donor is the Glu209.

It catalyses the reaction Endohydrolysis of (1-&gt;4)-beta-D-xylosidic linkages in xylans.. It functions in the pathway glycan degradation; xylan degradation. The polypeptide is Endo-1,4-beta-xylanase (XYNA) (Thermomyces lanuginosus (Humicola lanuginosa)).